Consider the following 249-residue polypeptide: Tetraspanin-18 (249 aa).

At Met-1–Met-13 the chain is on the cytoplasmic side. The chain crosses the membrane as a helical span at residues Phe-14–Val-34. At Met-35–Pro-49 the chain is on the extracellular side. A helical transmembrane segment spans residues Leu-50–Phe-70. The Cytoplasmic portion of the chain corresponds to Leu-71–Leu-83. The chain crosses the membrane as a helical span at residues Leu-84 to Leu-104. The Extracellular segment spans residues Ala-105–Gly-223. Asn-111 and Asn-129 each carry an N-linked (GlcNAc...) asparagine glycan. A helical membrane pass occupies residues Ala-224–Phe-244. Topologically, residues Arg-245 to Gln-249 are cytoplasmic.

Belongs to the tetraspanin (TM4SF) family. Interacts with ORAI1; this interaction regulates ORAI1 exit from the endoplasmic (ER), and/or Golgi, and trafficking to the cell surface.

The protein resides in the membrane. Plays a role in the cell surface localization of ORAI1 and may participate in the regulation of Ca(2+) signaling and the VWF release in response to inflammatory stimuli. This chain is Tetraspanin-18, found in Bos taurus (Bovine).